The chain runs to 513 residues: ATP synthase subunit alpha (513 aa).

An ATP-binding site is contributed by 169 to 176; that stretch reads GDRQTGKT.

The protein belongs to the ATPase alpha/beta chains family. In terms of assembly, F-type ATPases have 2 components, CF(1) - the catalytic core - and CF(0) - the membrane proton channel. CF(1) has five subunits: alpha(3), beta(3), gamma(1), delta(1), epsilon(1). CF(0) has three main subunits: a(1), b(2) and c(9-12). The alpha and beta chains form an alternating ring which encloses part of the gamma chain. CF(1) is attached to CF(0) by a central stalk formed by the gamma and epsilon chains, while a peripheral stalk is formed by the delta and b chains.

It localises to the cell inner membrane. It catalyses the reaction ATP + H2O + 4 H(+)(in) = ADP + phosphate + 5 H(+)(out). Its function is as follows. Produces ATP from ADP in the presence of a proton gradient across the membrane. The alpha chain is a regulatory subunit. In Cupriavidus pinatubonensis (strain JMP 134 / LMG 1197) (Cupriavidus necator (strain JMP 134)), this protein is ATP synthase subunit alpha.